The following is a 1079-amino-acid chain: Translation initiation factor IF-2 (1079 aa).

Basic and acidic residues-rich tracts occupy residues 52–65 (VQAQRDGGARKEGN), 75–90 (RDGDRASARAEAKAPE), and 102–134 (APERAEEADKPAVAKPAKAPETEAHARARKEPQ). Positions 52–488 (VQAQRDGGAR…RGKKDVRPAA (437 aa)) are disordered. Residues 150 to 184 (APVAKVVEAAPAETPAPEAPAVKATVTAEAAPAKT) show a composition bias toward low complexity. Basic and acidic residues predominate over residues 185–194 (VEPESERPQA). A compositionally biased stretch (low complexity) spans 276-291 (AAVAQQQMQQQAAQQQ). Basic and acidic residues predominate over residues 306–327 (GGYRPEGQREGGYRPEGQREGG). 2 stretches are compositionally biased toward low complexity: residues 348–370 (EGGYRPGAPRPEGGYRPAGGPRP) and 380–398 (PGAPRPEGGYRPAGGAPRP). A compositionally biased stretch (gly residues) spans 419-429 (PRPGGFGGAPG). Basic and acidic residues predominate over residues 461-471 (PRGRSDDDVMR). Positions 473 to 482 (PRGRGKRGKK) are enriched in basic residues. One can recognise a tr-type G domain in the interval 578 to 745 (TRPPVVTIMG…LIAIQAEILE (168 aa)). Residues 587 to 594 (GHVDHGKT) are G1. GTP is bound at residue 587–594 (GHVDHGKT). Positions 612–616 (GITQH) are G2. Residues 633-636 (DTPG) form a G3 region. GTP-binding positions include 633–637 (DTPGH) and 687–690 (NKMD). Residues 687-690 (NKMD) are G4. Residues 723 to 725 (SAK) form a G5 region.

This sequence belongs to the TRAFAC class translation factor GTPase superfamily. Classic translation factor GTPase family. IF-2 subfamily.

The protein resides in the cytoplasm. Its function is as follows. One of the essential components for the initiation of protein synthesis. Protects formylmethionyl-tRNA from spontaneous hydrolysis and promotes its binding to the 30S ribosomal subunits. Also involved in the hydrolysis of GTP during the formation of the 70S ribosomal complex. This is Translation initiation factor IF-2 from Nitratidesulfovibrio vulgaris (strain ATCC 29579 / DSM 644 / CCUG 34227 / NCIMB 8303 / VKM B-1760 / Hildenborough) (Desulfovibrio vulgaris).